Consider the following 854-residue polypeptide: Glucans biosynthesis glucosyltransferase H (854 aa).

Helical transmembrane passes span 155-175 (ILLALTLFQTAIATWYMKTIL), 209-229 (ILVLFAVLFCWVSAGFWTALM), 528-548 (VFLTGVMSYLSAPLWFMFLVL), 583-603 (IALFSTTLVLLFLPKLLSVIL), 619-639 (FLSLLLEMLFSVLLAPVRMLF), 671-691 (FVRHGSQLILGLVWAIGMAWL), and 695-715 (FLWWLSPIVFSLILSPVVSVY).

Belongs to the glycosyltransferase 2 family. OpgH subfamily.

The protein resides in the cell inner membrane. The protein operates within glycan metabolism; osmoregulated periplasmic glucan (OPG) biosynthesis. Its function is as follows. Involved in the biosynthesis of osmoregulated periplasmic glucans (OPGs). The polypeptide is Glucans biosynthesis glucosyltransferase H (Pectobacterium atrosepticum (strain SCRI 1043 / ATCC BAA-672) (Erwinia carotovora subsp. atroseptica)).